Consider the following 865-residue polypeptide: AP-1 complex subunit gamma-1 (865 aa).

Residues Ala-665–Ser-690 form a disordered region. The segment covering Met-675–Ser-690 has biased composition (polar residues). Residues Lys-746–Pro-860 enclose the GAE domain.

It belongs to the adaptor complexes large subunit family. In terms of assembly, adaptor protein complex 1 (AP-1) is a heterotetramer composed of two large adaptins (gamma-type subunit apl4 and beta-type subunit apl2), a medium adaptin (mu-type subunit apm1) and a small adaptin (sigma-type subunit aps1). AP-1 interacts with clathrin.

Its subcellular location is the cytoplasmic vesicle. It is found in the clathrin-coated vesicle membrane. The protein resides in the golgi apparatus. Its function is as follows. Adaptins are components of the adaptor complexes which link clathrin to receptors in coated vesicles. Clathrin-associated protein complexes are believed to interact with the cytoplasmic tails of membrane proteins, leading to their selection and concentration. The AP-1 complex interacts directly with clathrin. The protein is AP-1 complex subunit gamma-1 (apl4) of Schizosaccharomyces pombe (strain 972 / ATCC 24843) (Fission yeast).